A 236-amino-acid chain; its full sequence is Transmembrane protein 65 (236 aa).

A mitochondrion-targeting transit peptide spans 1-57 (MSRLLPLLRSRTARSLRPGPAAAAAPRPPSWCCCGRGLLALAAPGGPRALGTHPKKE). Residues 58–106 (PIEALNTAQGARDFIYSLHSSERSCLLKELHRFESIAIAQEKLEAQPPT) are Cytoplasmic-facing. A helical membrane pass occupies residues 107-127 (PGQLRYVFIHNAIPFIGFGFL). Topologically, residues 128-138 (DNAIMIVAGTH) are extracellular. The helical transmembrane segment at 139-161 (IELSIGIILGISTMAAAALGNLV) threads the bilayer. Residues 162–205 (SDLAGLGLAGYVEALASRLGLSIPDLSPKQVDMWQTRVSSHLGK) lie on the Cytoplasmic side of the membrane. Residues 206–226 (AVGVTIGCILGMFPLIFFGGG) form a helical membrane-spanning segment. Topologically, residues 227–236 (EDDEKLEKKN) are extracellular.

Monomer. Homodimer. Interacts with GJA1. Interacts weakly with DSP. Interacts with SCN1B.

Its subcellular location is the cell membrane. The protein resides in the mitochondrion inner membrane. Functionally, essential for maintaining proper cardiac intercalated disk (ICD) structure and function as well as cardiac conduction velocity in the heart. Its association with SCN1B is required for stabilizing the perinexus in the ICD and for localization of GJA1 and SCN5A to the ICD. May regulate the function of the gap junction protein GJA1 and may contribute to the stability and proper localization of GJA1 to cardiac intercalated disk thereby regulating gap junction communication. Regulates mitochondrial respiration and mitochondrial DNA copy number maintenance. The chain is Transmembrane protein 65 (TMEM65) from Bos taurus (Bovine).